We begin with the raw amino-acid sequence, 22 residues long: Superoxide dismutase [Cu-Zn] 2 (22 aa).

It belongs to the Cu-Zn superoxide dismutase family. In terms of assembly, homodimer. Cu cation serves as cofactor. Zn(2+) is required as a cofactor. Dominant isozyme in roots.

It is found in the cytoplasm. It carries out the reaction 2 superoxide + 2 H(+) = H2O2 + O2. Destroys radicals which are normally produced within the cells and which are toxic to biological systems. The chain is Superoxide dismutase [Cu-Zn] 2 from Picea abies (Norway spruce).